The sequence spans 263 residues: Protein PUN1 (263 aa).

The Cytoplasmic portion of the chain corresponds to 1–6 (MRNFFT). Residues 7–27 (LFFAAIFSLGALILAIVACAG) form a helical membrane-spanning segment. The Extracellular portion of the chain corresponds to 28 to 143 (STKNYSPINK…MTYYNNLVKC (116 aa)). N-linked (GlcNAc...) asparagine glycosylation is present at asparagine 100. A helical transmembrane segment spans residues 144-164 (MFITILIGIVLTFVNLVFNVL). The Cytoplasmic portion of the chain corresponds to 165–172 (RWIIHIRP). A helical membrane pass occupies residues 173-193 (LTWFGAFFSFFAFAALLVSIG). At 194–223 (SCLGTYSYIKYILKHNYSDYGISMSIGRNY) the chain is on the extracellular side. Asparagine 209 is a glycosylation site (N-linked (GlcNAc...) asparagine). Residues 224 to 244 (QGLMWGAVVGALLNFILWCSV) traverse the membrane as a helical segment. The Cytoplasmic portion of the chain corresponds to 245–263 (RSRPTVIYANAPIEEKPLI). A Glycyl lysine isopeptide (Lys-Gly) (interchain with G-Cter in ubiquitin) cross-link involves residue lysine 260.

The protein belongs to the SUR7 family. Post-translationally, N-glycosylated.

Its subcellular location is the cell membrane. Functionally, contributes to the wild-type cellular response to nitrogen stress through signaling pathways that regulate the expression of genes involved in amino acid biosynthesis. Required for wild-type filamentous growth, cell growth, and cell-cell adhesion. The sequence is that of Protein PUN1 (PUN1) from Saccharomyces cerevisiae (strain ATCC 204508 / S288c) (Baker's yeast).